The following is a 1322-amino-acid chain: BRCA2-interacting transcriptional repressor EMSY (1322 aa).

The segment at 1–478 is interaction with BRCA2; it reads MPVVWPTLLD…LPKPVTATLP (478 aa). Residues 16-100 enclose the ENT domain; the sequence is CKRILRKLEL…EWSIEGRRLV (85 aa). An interaction with ZMYND11 region spans residues 104-108; the sequence is PRLVP. Residues 148-162 are compositionally biased toward low complexity; the sequence is STTSTPTSTPVPSGS. Disordered stretches follow at residues 148–178 and 192–215; these read STTSTPTSTPVPSGSIATVKSPRPASPASNV and VSCSDEDEKPRKRRRTNSSSSSPV. At threonine 207 the chain carries Phosphothreonine. Residues serine 209 and serine 213 each carry the phosphoserine modification. Serine 228 and serine 236 each carry an O-linked (GlcNAc) serine glycan. Phosphoserine is present on serine 238. Residue threonine 271 is glycosylated (O-linked (GlcNAc) threonine). Over residues 417 to 437 the composition is skewed to low complexity; it reads QQTQQQVAQPSPVSHQQQPQQ. The segment at 417–444 is disordered; sequence QQTQQQVAQPSPVSHQQQPQQSPLPPGI. O-linked (GlcNAc) threonine glycans are attached at residues threonine 501 and threonine 506. An O-linked (GlcNAc) serine glycan is attached at serine 557. Residues 698-707 show a composition bias toward polar residues; sequence VAEAGNSSIQ. The segment at 698–736 is disordered; the sequence is VAEAGNSSIQEGKEEPQNYTDSSSSSTESSQSSQDSQPV. Over residues 717-734 the composition is skewed to low complexity; that stretch reads TDSSSSSTESSQSSQDSQ. 2 positions are modified to phosphoserine: serine 818 and serine 821. O-linked (GlcNAc) threonine glycosylation occurs at threonine 1120. Serine 1136 is modified (phosphoserine). The span at 1205 to 1223 shows a compositional bias: polar residues; it reads QKCRESCSSPSTVGSSLTT. 2 disordered regions span residues 1205–1231 and 1290–1322; these read QKCRESCSSPSTVGSSLTTRKIDPPAV and QLDDEETAMEQDIDSSTEDGTEPSPSQSSAERS. The span at 1291-1310 shows a compositional bias: acidic residues; sequence LDDEETAMEQDIDSSTEDGT. Residues 1312–1322 show a composition bias toward polar residues; it reads PSPSQSSAERS.

In terms of assembly, homodimer. Interacts with the transactivation domain of BRCA2. Interacts with CBX1 (via chromoshadow domain). Interacts with ZMYND11. Does not interact with CBX3 or CBX5. Component of a nuclear receptor-mediated transcription complex composed of at least ZNF335, CCAR2 and EMSY; the complex stimulates the transcription of nuclear receptor target genes such as SOX9 and HOXA1. Within the complex interacts with CCAR2 and ZNF335. Components of this complex may associate with components of a histone methylation complex to form a complex at least composed of ZNF335, HCFC1, CCAR2, EMSY, MKI67, RBBP5, ASH2L and WDR5. Within this complex, interacts with ASH2L and RBBP5. O-glycosylated during cytokinesis at sites identical or close to phosphorylation sites, this interferes with the phosphorylation status.

The protein localises to the nucleus. Functionally, regulator which is able to repress transcription, possibly via its interaction with a multiprotein chromatin remodeling complex that modifies the chromatin. Its interaction with BRCA2 suggests that it may play a central role in the DNA repair function of BRCA2. Mediates ligand-dependent transcriptional activation by nuclear hormone receptors. The chain is BRCA2-interacting transcriptional repressor EMSY from Homo sapiens (Human).